We begin with the raw amino-acid sequence, 70 residues long: Beta-defensin 107A (70 aa).

An N-terminal signal peptide occupies residues 1–26 (MPGAMKIFFFIFAALILLAQIFQART). 2 cysteine pairs are disulfide-bonded: cysteine 41–cysteine 55 and cysteine 45–cysteine 64.

This sequence belongs to the beta-defensin family.

It localises to the secreted. Functionally, has antibacterial activity. In Pan troglodytes (Chimpanzee), this protein is Beta-defensin 107A (DEFB107A).